Here is a 485-residue protein sequence, read N- to C-terminus: MKPTIALIGRPNVGKSTLFNRLTRTKDALVHDLPGLTRDRHYGHGKVGSKPYFVIDTGGFEPVVDSGILHEMAKQTLQAVDEADAVVFLVDGRTGLTPQDKIIADRLRQSPRPVYLAVNKGEGGDRAVLAAEFYELALGEPHVISGAHGDGVYYLIEEILENFPEPEAEEADAKHPVFAVIGRPNVGKSTLVNAILGEKRVIAFDMAGTTRDSIHIDFEREGKPFTIIDTAGVRRRGKVDEAVEKFSVIKAMQAVEAANVAVLVLDAQQDIADQDATIAGFALEAGRALVVAVNKWDGISEERREQVKRDISRKLYFLDFAKFHFISALKERGIDGLFESIQAAYNAAMIKMPTPKITRVLQTAVGRQQPPRAGLVRPKMRYAHQGGMNPPVIVVHGNSLHAISDSYTRYLTQTFRKAFNLQGTPLRIQYNVSENPYENAEDKPKKKPLRRVSLSNRIEKREGRKEEKNRFKKKTKVSVKKQFSK.

EngA-type G domains are found at residues 3–167 (PTIA…PEPE) and 176–349 (PVFA…NAAM). GTP is bound by residues 9-16 (GRPNVGKS), 56-60 (DTGGF), 119-122 (NKGE), 182-189 (GRPNVGKS), 229-233 (DTAGV), and 294-297 (NKWD). In terms of domain architecture, KH-like spans 350–434 (IKMPTPKITR…PLRIQYNVSE (85 aa)). A disordered region spans residues 435–485 (NPYENAEDKPKKKPLRRVSLSNRIEKREGRKEEKNRFKKKTKVSVKKQFSK). Basic and acidic residues predominate over residues 457–469 (RIEKREGRKEEKN). The span at 470–485 (RFKKKTKVSVKKQFSK) shows a compositional bias: basic residues.

It belongs to the TRAFAC class TrmE-Era-EngA-EngB-Septin-like GTPase superfamily. EngA (Der) GTPase family. Associates with the 50S ribosomal subunit.

GTPase that plays an essential role in the late steps of ribosome biogenesis. The protein is GTPase Der of Neisseria gonorrhoeae (strain NCCP11945).